A 235-amino-acid polypeptide reads, in one-letter code: Sugar fermentation stimulation protein homolog (235 aa).

Belongs to the SfsA family.

This chain is Sugar fermentation stimulation protein homolog, found in Azotobacter vinelandii (strain DJ / ATCC BAA-1303).